Reading from the N-terminus, the 65-residue chain is Protein translocase subunit SecE (65 aa).

At 1–34 (MEKLRKFFREVIAEAKKISWPSRKELLTSFGVVL) the chain is on the cytoplasmic side. A helical membrane pass occupies residues 35–51 (VILAVTSVYFFVLDFIF). The Extracellular segment spans residues 52 to 65 (SGVVSAIFKALGIG).

The protein belongs to the SecE/SEC61-gamma family. Component of the Sec protein translocase complex. Heterotrimer consisting of SecY, SecE and SecG subunits. The heterotrimers can form oligomers, although 1 heterotrimer is thought to be able to translocate proteins. Interacts with SecDF, and other proteins may be involved. The channel interacts with SecA via subunit SecY.

The protein localises to the cell inner membrane. Essential subunit of the protein translocation channel SecYEG. Clamps together the 2 halves of SecY. May contact the channel plug during translocation. This Thermotoga maritima (strain ATCC 43589 / DSM 3109 / JCM 10099 / NBRC 100826 / MSB8) protein is Protein translocase subunit SecE.